Reading from the N-terminus, the 348-residue chain is tRNA N6-adenosine threonylcarbamoyltransferase (348 aa).

Fe cation-binding residues include His116 and His120. Substrate is bound by residues 138 to 142 (QVSGG), Asp171, Gly184, Asp188, and Asn277. Asp309 is a binding site for Fe cation.

The protein belongs to the KAE1 / TsaD family. Fe(2+) is required as a cofactor.

Its subcellular location is the cytoplasm. It catalyses the reaction L-threonylcarbamoyladenylate + adenosine(37) in tRNA = N(6)-L-threonylcarbamoyladenosine(37) in tRNA + AMP + H(+). Required for the formation of a threonylcarbamoyl group on adenosine at position 37 (t(6)A37) in tRNAs that read codons beginning with adenine. Is involved in the transfer of the threonylcarbamoyl moiety of threonylcarbamoyl-AMP (TC-AMP) to the N6 group of A37, together with TsaE and TsaB. TsaD likely plays a direct catalytic role in this reaction. The chain is tRNA N6-adenosine threonylcarbamoyltransferase from Lactobacillus gasseri (strain ATCC 33323 / DSM 20243 / BCRC 14619 / CIP 102991 / JCM 1131 / KCTC 3163 / NCIMB 11718 / NCTC 13722 / AM63).